The chain runs to 479 residues: FAD-dependent monooxygenase cdmI (479 aa).

Positions 43, 57, and 116 each coordinate FAD. N-linked (GlcNAc...) asparagine glycosylation is found at Asn156 and Asn198. Residues Asp315 and Ala328 each contribute to the FAD site. Residues Pro453–Trp473 form a helical membrane-spanning segment.

Belongs to the paxM FAD-dependent monooxygenase family. It depends on FAD as a cofactor.

The protein localises to the membrane. The enzyme catalyses verruculide C + AH2 + O2 = verruculide C epoxide + A + H2O. The protein operates within secondary metabolite biosynthesis; terpenoid biosynthesis. Its function is as follows. FAD-dependent monooxygenase; part of the gene cluster that mediates the biosynthesis of chrodrimanin B, a meroterpenoid that acts as a potent blocker of insect GABA-gated chloride channels. The first step of the pathway is the biosynthesis of 6-hydroxymellein by the polyketide synthase cdmE. The prenyltransferase cdmH acts as a 6-hydroxymellein 5-farnesyltransferase and produces the hydrophobic metabolite verruculide C. The FAD-dependent monooxygenase cdmI further converts verruculide C into verruculide B. The terpene cyclase cdmG then produced the pentacyclic molecule 3-hydroxypentacecilide A, the backbone structure of chrodrimanin B, via folding the farnesyl moiety of the substrate into the chair-boat conformation. The short-chain dehydrogenase/reductase cdmF functions as the 3-OH dehydrogenase that oxidizes the C-3 hydroxyl group of 3-hydroxypentacecilide A and produces chrodrimanin C, the dehydrogenated product of 3-hydroxypentacecilide A. The cytochrome P450 monooxygenase cdmJ then accepts both 3-hydroxypentacecilide A and chrodrimanin C and functions as a C-7-beta-hydroxylase to produce respectively chrodrimanin H and chrodrimanin F. The dioxygenase cdmA accepts chrodrimanin H to afford chrodrimanin E, which is further transformed to chrodrimanin A by the dioxygenase cdmD. CdmA can also accept chrodrimanin C as substrate to convert it into verruculide A, which is further converted into chrodrimanin T by cdmD. The last step of the biosynthesis is proposed to be performed by the acetyltransferase cdmC which acetylates chrodrimanin A to yield chrodrimanin B. The pathway may also lead to the production of additional shunt products, including chrodrimanins T and U. This chain is FAD-dependent monooxygenase cdmI, found in Talaromyces verruculosus (Penicillium verruculosum).